The primary structure comprises 557 residues: Formate--tetrahydrofolate ligase (557 aa).

Position 65-72 (65-72) interacts with ATP; it reads TPAGEGKT.

Belongs to the formate--tetrahydrofolate ligase family.

The catalysed reaction is (6S)-5,6,7,8-tetrahydrofolate + formate + ATP = (6R)-10-formyltetrahydrofolate + ADP + phosphate. The protein operates within one-carbon metabolism; tetrahydrofolate interconversion. This Methylorubrum extorquens (strain PA1) (Methylobacterium extorquens) protein is Formate--tetrahydrofolate ligase.